Reading from the N-terminus, the 394-residue chain is 1-deoxy-D-xylulose 5-phosphate reductoisomerase (394 aa).

Residues threonine 11, glycine 12, serine 13, isoleucine 14, glycine 37, asparagine 39, and asparagine 126 each coordinate NADPH. Lysine 127 is a binding site for 1-deoxy-D-xylulose 5-phosphate. Residue glutamate 128 participates in NADPH binding. Aspartate 152 lines the Mn(2+) pocket. Residues serine 153, glutamate 154, serine 178, and histidine 201 each coordinate 1-deoxy-D-xylulose 5-phosphate. Glutamate 154 contacts Mn(2+). Glycine 207 serves as a coordination point for NADPH. Residues serine 214, asparagine 219, lysine 220, and glutamate 223 each coordinate 1-deoxy-D-xylulose 5-phosphate. Glutamate 223 provides a ligand contact to Mn(2+).

The protein belongs to the DXR family. It depends on Mg(2+) as a cofactor. Mn(2+) serves as cofactor.

The enzyme catalyses 2-C-methyl-D-erythritol 4-phosphate + NADP(+) = 1-deoxy-D-xylulose 5-phosphate + NADPH + H(+). It participates in isoprenoid biosynthesis; isopentenyl diphosphate biosynthesis via DXP pathway; isopentenyl diphosphate from 1-deoxy-D-xylulose 5-phosphate: step 1/6. Its function is as follows. Catalyzes the NADPH-dependent rearrangement and reduction of 1-deoxy-D-xylulose-5-phosphate (DXP) to 2-C-methyl-D-erythritol 4-phosphate (MEP). The protein is 1-deoxy-D-xylulose 5-phosphate reductoisomerase of Synechocystis sp. (strain ATCC 27184 / PCC 6803 / Kazusa).